Here is a 370-residue protein sequence, read N- to C-terminus: Probable endopolygalacturonase A (370 aa).

The N-terminal stretch at 1–19 (MPSAKPLFCLATLAGAALA) is a signal peptide. The propeptide occupies 20–32 (APAPSRVSDFTKR). Cysteines 35 and 50 form a disulfide. PbH1 repeat units follow at residues 162 to 192 (SDNLVIEDVTIDNSDGDSEGGHNTDGFDISE), 193 to 214 (STYITITGATVKNQDDCVAINS), 215 to 235 (GENIYFSGGTCSGGHGLSIGS), 244 to 265 (VKNVTFIDSTVSDSENGVRIKT), 273 to 295 (VEDITYSNIQLSGISDYGIVIEQ), and 307 to 352 (SNGV…DITG). D207 (proton donor) is an active-site residue. C209 and C225 form a disulfide bridge. Residue H229 is part of the active site. N-linked (GlcNAc...) asparagine glycosylation occurs at N246. Disulfide bonds link C335–C340 and C359–C368.

It belongs to the glycosyl hydrolase 28 family.

It localises to the secreted. The enzyme catalyses (1,4-alpha-D-galacturonosyl)n+m + H2O = (1,4-alpha-D-galacturonosyl)n + (1,4-alpha-D-galacturonosyl)m.. Involved in maceration and soft-rotting of plant tissue. Hydrolyzes the 1,4-alpha glycosidic bonds of de-esterified pectate in the smooth region of the plant cell wall. This Aspergillus niger (strain ATCC MYA-4892 / CBS 513.88 / FGSC A1513) protein is Probable endopolygalacturonase A (pgaA).